The following is a 230-amino-acid chain: MIYFTMFLLGGILGIALWFYLSGFITRLQQNIYAIYVELFPQNRSPFQPHFASIQQKKCGHILRYFFSIGVGFIFLQIAFKDSIFTVWIGLTLIILWTISYLDWHYQLISTTPCLWLLTLGLFGADNNFSLLTLSESIKSAASFFIVFYVIYWLAKFYYGKEAFGRGDYWLAMALGSFIHLETLPHFLLLASVLGICFSLIHRKKKEFLPFAPFMNLSAVIIYFVKYYGY.

Helical transmembrane passes span 1–21 (MIYF…WFYL), 60–80 (GHIL…QIAF), 84–104 (IFTV…YLDW), 114–134 (CLWL…LLTL), 140–160 (SAAS…FYYG), 181–201 (LETL…FSLI), and 208–228 (FLPF…VKYY).

Belongs to the peptidase A24 family.

Its subcellular location is the cell inner membrane. The enzyme catalyses Typically cleaves a -Gly-|-Phe- bond to release an N-terminal, basic peptide of 5-8 residues from type IV prepilin, and then N-methylates the new N-terminal amino group, the methyl donor being S-adenosyl-L-methionine.. Functionally, plays a role in type II pseudopili formation by proteolytically removing the leader sequence from substrate proteins and subsequently monomethylating the alpha-amino group of the newly exposed N-terminal phenylalanine. Substrates include proteins required for biogenesis of the type II general secretory apparatus. This is Prepilin leader peptidase/N-methyltransferase (hofD) from Haemophilus influenzae (strain ATCC 51907 / DSM 11121 / KW20 / Rd).